The chain runs to 130 residues: Guanylate kinase (130 aa).

Positions 1–130 (KIFEDPTTSY…EKIQSRVNEA (130 aa)) constitute a Guanylate kinase-like domain.

The protein belongs to the guanylate kinase family.

It localises to the cytoplasm. It catalyses the reaction GMP + ATP = GDP + ADP. Essential for recycling GMP and indirectly, cGMP. The protein is Guanylate kinase (gmk) of Staphylococcus epidermidis.